A 359-amino-acid chain; its full sequence is 2-amino-3-carboxymuconate-6-semialdehyde decarboxylase (359 aa).

Positions Met1–Thr13 are enriched in low complexity. The interval Met1–Lys21 is disordered. 2 residues coordinate Zn(2+): His29 and His31. Arg70 contacts substrate. Residues His197 and Asp314 each contribute to the Zn(2+) site.

It belongs to the metallo-dependent hydrolases superfamily. ACMSD family. Monomer.

The enzyme catalyses 2-amino-3-carboxymuconate 6-semialdehyde + H(+) = 2-aminomuconate 6-semialdehyde + CO2. It participates in secondary metabolite metabolism; quinolate metabolism. Functionally, converts alpha-amino-beta-carboxymuconate-epsilon-semialdehyde (ACMS) to alpha-aminomuconate semialdehyde (AMS). The polypeptide is 2-amino-3-carboxymuconate-6-semialdehyde decarboxylase (acmsd) (Dictyostelium discoideum (Social amoeba)).